The primary structure comprises 346 residues: Aspartate-semialdehyde dehydrogenase (346 aa).

NADP(+)-binding positions include 13 to 16 and 41 to 42; these read TGAV and RS. A Phosphoserine modification is found at serine 98. Phosphate is bound at residue arginine 101. Cysteine 130 acts as the Acyl-thioester intermediate in catalysis. At tyrosine 146 the chain carries Phosphotyrosine. Residue glutamine 157 coordinates substrate. Position 160–161 (160–161) interacts with NADP(+); sequence SG. Lysine 221 lines the phosphate pocket. Arginine 243 contributes to the substrate binding site. The Proton acceptor role is filled by histidine 250. Asparagine 324 is an NADP(+) binding site.

This sequence belongs to the aspartate-semialdehyde dehydrogenase family. In terms of assembly, homodimer.

The catalysed reaction is L-aspartate 4-semialdehyde + phosphate + NADP(+) = 4-phospho-L-aspartate + NADPH + H(+). The protein operates within amino-acid biosynthesis; L-lysine biosynthesis via DAP pathway; (S)-tetrahydrodipicolinate from L-aspartate: step 2/4. Its pathway is amino-acid biosynthesis; L-methionine biosynthesis via de novo pathway; L-homoserine from L-aspartate: step 2/3. It functions in the pathway amino-acid biosynthesis; L-threonine biosynthesis; L-threonine from L-aspartate: step 2/5. Catalyzes the NADPH-dependent formation of L-aspartate-semialdehyde (L-ASA) by the reductive dephosphorylation of L-aspartyl-4-phosphate. The chain is Aspartate-semialdehyde dehydrogenase from Bacillus subtilis (strain 168).